The sequence spans 208 residues: uncharacterized protein (208 aa).

A signal peptide spans 1–16 (MKFLLIACLAVPAILA). A glycan (N-linked (GlcNAc...) asparagine) is linked at Asn79.

This is an uncharacterized protein from Caenorhabditis elegans.